Here is a 93-residue protein sequence, read N- to C-terminus: Beta-defensin 128 (93 aa).

The first 18 residues, 1-18 (MKLFLVLIILLFEVLTDG), serve as a signal peptide directing secretion. 3 disulfides stabilise this stretch: cysteine 24/cysteine 52, cysteine 32/cysteine 46, and cysteine 36/cysteine 53.

This sequence belongs to the beta-defensin family.

The protein resides in the secreted. Has antibacterial activity. In Macaca fascicularis (Crab-eating macaque), this protein is Beta-defensin 128 (DEFB128).